A 166-amino-acid chain; its full sequence is RING-H2 finger protein ATL79 (166 aa).

The N-terminal stretch at 1–16 is a signal peptide; the sequence is MRLLVAEAASPLSSAA. The helical transmembrane segment at 41–61 threads the bilayer; it reads SVLLILVISALICALSLYAAI. The interval 71-90 is disordered; it reads TEDDHKPDPEAAASSTPTTP. Over residues 81–90 the composition is skewed to low complexity; that stretch reads AAASSTPTTP. The segment at 107 to 149 adopts an RING-type; atypical zinc-finger fold; it reads CAICLSEFEQGESIQVLEKCQHGFHVKCIHKWLSTRSSCPTCR.

The protein belongs to the RING-type zinc finger family. ATL subfamily.

It is found in the membrane. The catalysed reaction is S-ubiquitinyl-[E2 ubiquitin-conjugating enzyme]-L-cysteine + [acceptor protein]-L-lysine = [E2 ubiquitin-conjugating enzyme]-L-cysteine + N(6)-ubiquitinyl-[acceptor protein]-L-lysine.. Its pathway is protein modification; protein ubiquitination. The polypeptide is RING-H2 finger protein ATL79 (ATL79) (Arabidopsis thaliana (Mouse-ear cress)).